A 243-amino-acid chain; its full sequence is Cytochrome c1, heme protein (243 aa).

Over Gly-1–Lys-201 the chain is Mitochondrial intermembrane. The 190-residue stretch at His-5–Asn-194 folds into the Cytochrome c domain. Residues Cys-39, His-40, and Met-159 each coordinate heme. A helical transmembrane segment spans residues Leu-202–Tyr-221. Over Asn-222 to Lys-243 the chain is Mitochondrial matrix.

It belongs to the cytochrome c family. In terms of assembly, component of the ubiquinol-cytochrome c oxidoreductase (cytochrome b-c1 complex, complex III, CIII), a multisubunit enzyme composed of 3 respiratory subunits cytochrome b, cytochrome c1 and Rieske protein, 2 core protein subunits, and additional low-molecular weight protein subunits. The complex exists as an obligatory dimer and forms supercomplexes (SCs) in the inner mitochondrial membrane with cytochrome c oxidase (complex IV, CIV). Requires heme as cofactor.

Its subcellular location is the mitochondrion inner membrane. The enzyme catalyses a quinol + 2 Fe(III)-[cytochrome c](out) = a quinone + 2 Fe(II)-[cytochrome c](out) + 2 H(+)(out). Its function is as follows. Component of the ubiquinol-cytochrome c oxidoreductase, a multisubunit transmembrane complex that is part of the mitochondrial electron transport chain which drives oxidative phosphorylation. The respiratory chain contains 3 multisubunit complexes succinate dehydrogenase (complex II, CII), ubiquinol-cytochrome c oxidoreductase (cytochrome b-c1 complex, complex III, CIII) and cytochrome c oxidase (complex IV, CIV), that cooperate to transfer electrons derived from NADH and succinate to molecular oxygen, creating an electrochemical gradient over the inner membrane that drives transmembrane transport and the ATP synthase. The cytochrome b-c1 complex catalyzes electron transfer from ubiquinol to cytochrome c, linking this redox reaction to translocation of protons across the mitochondrial inner membrane, with protons being carried across the membrane as hydrogens on the quinol. In the process called Q cycle, 2 protons are consumed from the matrix, 4 protons are released into the intermembrane space and 2 electrons are passed to cytochrome c. Cytochrome c1 is a catalytic core subunit containing a c-type heme. It transfers electrons from the [2Fe-2S] iron-sulfur cluster of the Rieske protein to cytochrome c. This Euglena gracilis protein is Cytochrome c1, heme protein.